A 58-amino-acid polypeptide reads, in one-letter code: SPbeta prophage-derived uncharacterized protein YonT (58 aa).

A helical membrane pass occupies residues 6–26 (GIVVAFLISLTVLTINSLTIV). The tract at residues 35-58 (GTSKKKKRIRKRLRPKRQRQRIRR) is disordered. Residues 36–58 (TSKKKKRIRKRLRPKRQRQRIRR) show a composition bias toward basic residues.

The protein resides in the cell membrane. The protein is SPbeta prophage-derived uncharacterized protein YonT (yonT) of Bacillus subtilis (strain 168).